The primary structure comprises 563 residues: MDVGELLSYQPNRGTKRPRDDEEEEQKMRRKQTGTRERGRYREEEMTVVEEADDDKKRLLQIIDRDGEEEEEEEEPLDESSVKKMILTFEKRSYKNQELRIKFPDNPEKFMESELDLNDIIQEMHVVATMPDLYHLLVELNAVQSLLGLLGHDNTDVSIAVVDLLQELTDIDTLHESEEGAEVLIDALVDGQVVALLVQNLERLDESVKEEADGVHNTLAIVENMAEFRPEMCTEGAQQGLLQWLLKRLKAKMPFDANKLYCSEVLAILLQDNDENRELLGELDGIDVLLQQLSVFKRHNPSTAEEQEMMENLFDSLCSCLMLSSNRERFLKGEGLQLMNLMLREKKISRSSALKVLDHAMIGPEGTDNCHKFVDILGLRTIFPLFMKSPRKIKKVGTTEKEHEEHVCSILASLLRNLRGQQRTRLLNKFTENDSEKVDRLMELHFKYLGAMQVADKKIEGEKHDMVRRGEIIDNDTEEEFYLRRLDAGLFVLQHICYIMAEICNANVPQIRQRVHQILNMRGSSIKIVRHIIKEYAENIGDGRSPEFRENEQKRILGLLENF.

Methionine 1 carries the N-acetylmethionine modification. The disordered stretch occupies residues 1–49; it reads MDVGELLSYQPNRGTKRPRDDEEEEQKMRRKQTGTRERGRYREEEMTVV. Positions 16–33 match the Nuclear localization signal motif; sequence KRPRDDEEEEQKMRRKQT. Basic and acidic residues predominate over residues 34–45; sequence GTRERGRYREEE. HEAT repeat units follow at residues 79–129 and 134–176; these read ESSV…VVAT and YHLL…TLHE. Lysine 91 bears the N6-acetyllysine mark. Positions 130 to 140 match the Nuclear export signal (NES) motif; sequence MPDLYHLLVEL. 5 ARM repeats span residues 178–228, 229–273, 274–323, 325–363, and 364–417; these read EEGA…MAEF, RPEM…LQDN, DENR…CLML, SNRERFLKGEGLQLMNLMLREKKISRSSALKVLDHAMIG, and PEGT…LLRN. At serine 389 the chain carries Phosphoserine. The stretch at 476–540 forms a coiled coil; that stretch reads DTEEEFYLRR…HIIKEYAENI (65 aa). Phosphoserine is present on serine 545.

As to quaternary structure, component of the PRP19-CDC5L splicing complex composed of a core complex comprising a homotetramer of PRPF19, CDC5L, PLRG1 and BCAS2, and at least three less stably associated proteins CTNNBL1, CWC15 and HSPA8. Interacts directly with CWC15 and CDC5L in the complex. Interacts with AICDA; the interaction is important for the antibody diversification activity of AICDA. Interacts with PRPF31 (via its NLS). Interacts (via its N-terminal NLS) with KPNA1 and KPNA2. In terms of tissue distribution, widely expressed with highest levels in skeletal muscle, placenta, heart, spleen, testis and thyroid.

The protein localises to the nucleus. Its subcellular location is the cytoplasm. Functionally, component of the PRP19-CDC5L complex that forms an integral part of the spliceosome and is required for activating pre-mRNA splicing. Participates in AID/AICDA-mediated somatic hypermutation (SHM) and class-switch recombination (CSR), 2 processes resulting in the production of high-affinity, mutated isotype-switched antibodies. The polypeptide is Beta-catenin-like protein 1 (CTNNBL1) (Homo sapiens (Human)).